The chain runs to 329 residues: Glycerol-3-phosphate dehydrogenase [NAD(P)+] (329 aa).

NADPH-binding residues include W11, R30, and K103. Sn-glycerol 3-phosphate is bound by residues K103, G132, and S134. A136 serves as a coordination point for NADPH. K187, D240, S250, R251, and N252 together coordinate sn-glycerol 3-phosphate. Residue K187 is the Proton acceptor of the active site. R251 contributes to the NADPH binding site. Residues V275 and E277 each coordinate NADPH.

Belongs to the NAD-dependent glycerol-3-phosphate dehydrogenase family.

It localises to the cytoplasm. The enzyme catalyses sn-glycerol 3-phosphate + NAD(+) = dihydroxyacetone phosphate + NADH + H(+). It carries out the reaction sn-glycerol 3-phosphate + NADP(+) = dihydroxyacetone phosphate + NADPH + H(+). It functions in the pathway membrane lipid metabolism; glycerophospholipid metabolism. Functionally, catalyzes the reduction of the glycolytic intermediate dihydroxyacetone phosphate (DHAP) to sn-glycerol 3-phosphate (G3P), the key precursor for phospholipid synthesis. The sequence is that of Glycerol-3-phosphate dehydrogenase [NAD(P)+] from Nitrosomonas eutropha (strain DSM 101675 / C91 / Nm57).